The following is a 728-amino-acid chain: Catalase-peroxidase (728 aa).

A cross-link (tryptophyl-tyrosyl-methioninium (Trp-Tyr) (with M-244)) is located at residues 91 to 218 (WHSAGTYRTA…LAAVQMGLIY (128 aa)). The active-site Proton acceptor is the histidine 92. The segment at residues 218–244 (YVNPEGPDGNPDPVAAARDIRDTFARM) is a cross-link (tryptophyl-tyrosyl-methioninium (Tyr-Met) (with W-91)). Residue histidine 259 coordinates heme b.

This sequence belongs to the peroxidase family. Peroxidase/catalase subfamily. In terms of assembly, homodimer or homotetramer. Heme b is required as a cofactor. Formation of the three residue Trp-Tyr-Met cross-link is important for the catalase, but not the peroxidase activity of the enzyme.

The enzyme catalyses H2O2 + AH2 = A + 2 H2O. The catalysed reaction is 2 H2O2 = O2 + 2 H2O. Functionally, bifunctional enzyme with both catalase and broad-spectrum peroxidase activity. This is Catalase-peroxidase from Burkholderia mallei (strain NCTC 10247).